Consider the following 153-residue polypeptide: Urease accessory protein UreE (153 aa).

Belongs to the UreE family.

The protein resides in the cytoplasm. Its function is as follows. Involved in urease metallocenter assembly. Binds nickel. Probably functions as a nickel donor during metallocenter assembly. This is Urease accessory protein UreE from Acetivibrio thermocellus (strain ATCC 27405 / DSM 1237 / JCM 9322 / NBRC 103400 / NCIMB 10682 / NRRL B-4536 / VPI 7372) (Clostridium thermocellum).